The sequence spans 98 residues: uncharacterized protein (98 aa).

Belongs to the YciI family. As to quaternary structure, homodimer.

This is an uncharacterized protein from Haemophilus influenzae (strain ATCC 51907 / DSM 11121 / KW20 / Rd).